A 316-amino-acid chain; its full sequence is Cation efflux system protein CzcD (316 aa).

6 helical membrane-spanning segments follow: residues 17–37, 47–67, 82–102, 115–135, 152–172, and 174–194; these read LKIALALTGTFLIAEVVGGVM, AAHMLTDTVALAIALAAIAIA, FEILAAAFNALLLFGVAIYIL, IESTGMFVVAVLGLIINLISM, YLEVWSDLLGSVGVIAGAIII, and FTGWAWVDSAIAVLIGLWVLP.

Belongs to the cation diffusion facilitator (CDF) transporter (TC 2.A.4) family. SLC30A subfamily.

It is found in the cell membrane. In terms of biological role, necessary for activation of the czc determinant. This chain is Cation efflux system protein CzcD (czcD), found in Alcaligenes sp. (strain CT14).